The primary structure comprises 1530 residues: Coiled-coil domain-containing protein 141 (1530 aa).

Thr-91 is modified (phosphothreonine). Coiled-coil stretches lie at residues 642-706, 758-783, and 861-970; these read VKNE…EALM, VKEK…QDYE, and SNVS…KTSD. Positions 1210 to 1241 are disordered; sequence SPDDISLPPLPGSPESPLAPSDMEVEEPVSSS. Residues 1409–1530 form the Ig-like domain; that stretch reads PNFSRLLSNV…VSLMYWLLTQ (122 aa).

In terms of assembly, interacts with DISC1. Interacts preferentially with phosphorylated forms of myosin regulatory light chain (MRLC). Interacts (via the N-terminal region) with HDAC6; inhibits the deacetylase activity of HDAC6. Interacts with KIBRA (via the C-terminal region); retains AMPAR in the cytosol after internalization. Post-translationally, ubiquitinated and degradated by the CDC20-APC/C pathway. During brain development, CDC20-APC/C complex degrades CCDC141 after centrosome translocation into the dilated area. CCDC141 is restabilized in the dilation until the centrosome enters the dilation, at which point it is once again immediately destabilized by CDC20-APC/C complex. The oscillatory regulation of CCDC141 protein is needed for proper cortical migration. Phosphorylation at Thr-91 by PLK1 affects CCDC141 degradation.

Its subcellular location is the cytoplasm. It localises to the cytoskeleton. The protein localises to the microtubule organizing center. The protein resides in the centrosome. Plays a critical role in cortical radial and GnRH neurons migration during brain development. Regulates cortical radial migration by negatively controlling the activity of histone deacetylase 6 (HDAC6) and promotes centrosome maturation. CAMDI is required for dilation formation of cortical neurons during radial migration. Plays a critical role in learning and memory performance through regulation of AMPA-selective glutamate receptors (AMPARs) cell surface expression in competition with KIBRA. The sequence is that of Coiled-coil domain-containing protein 141 (CCDC141) from Homo sapiens (Human).